Reading from the N-terminus, the 597-residue chain is Plasmepsin V (597 aa).

The Lumenal portion of the chain corresponds to 1 to 551 (MNNYFLRKEN…EKENIFLKVS (551 aa)). Residues 33-88 (CNNVENKIDNVGKKIENVGKKIGDMENKNDNVENKNDNVENKNDNVGNKNDNVKNA) are a coiled coil. Basic and acidic residues predominate over residues 58 to 75 (ENKNDNVENKNDNVENKN). Residues 58-83 (ENKNDNVENKNDNVENKNDNVGNKND) are disordered. Residues 107–521 (YFLDIDIGKP…DLQQNQIAFI (415 aa)) form the Peptidase A1 domain. Asp125 is a catalytic residue. Disulfide bonds link Cys135–Cys218, Cys138–Cys141, Cys162–Cys173, Cys167–Cys178, Cys266–Cys525, Cys396–Cys441, and Cys450–Cys486. The segment covering 289–298 (KEKQKMDKSD) has biased composition (basic and acidic residues). Residues 289–323 (KEKQKMDKSDNNSSNKGNVSIKLKNNDKNDDEENN) are disordered. Low complexity predominate over residues 299-311 (NNSSNKGNVSIKL). The active site involves Asp372. Residues 552–572 (YINLYCLWLLLALTILLSLIL) form a helical membrane-spanning segment. Residues 573–597 (YVRKMFYMDYFPLSDQNKSPIQEST) lie on the Cytoplasmic side of the membrane.

Belongs to the peptidase A1 family. In terms of assembly, component of a complex composed of SPC25 and PMV; the interaction is mediated via the transmembrane domains. The complex interacts with the SEC61 channel-forming translocon complex and is involved in the recognition and import of PEXEL motif-containing proteins into the ER for subsequent export. In terms of processing, it is not clear if the zymogen has a cleavable propeptide. In vitro, appears to be cleaved between Asn-87 and Ala-88. Cleavage of the putative propeptide is dispensable for catalytic activity.

The protein resides in the endoplasmic reticulum membrane. Functionally, during the asexual blood stage, plays an essential role in the export of several proteins into the host erythrocytes by cleaving the pentameric localization motif RxLxE/Q/D (termed Plasmodium export element (PEXEL)) located downstream of the N-terminal secretory signal sequence. Specifically, cleaves after the leucine residue in the RxLxE/Q/D (or RxLxxE) motif of exported proteins including RESA, EMP2, EMP3, KAHRP, RIF/Rifin and STEVOR. Also, by regulating protein export, plays an essential role in gametocyte development and thus parasite transmission to the mosquito vector. The polypeptide is Plasmepsin V (Plasmodium falciparum (isolate HB3)).